Consider the following 274-residue polypeptide: Large ribosomal subunit protein uL2cz/uL2cy (274 aa).

Disordered stretches follow at residues methionine 1–lysine 23 and methionine 223–lysine 274.

It belongs to the universal ribosomal protein uL2 family. As to quaternary structure, part of the 50S ribosomal subunit.

It localises to the plastid. The protein localises to the chloroplast. The protein is Large ribosomal subunit protein uL2cz/uL2cy (rpl2-A) of Ranunculus macranthus (Large buttercup).